Here is a 241-residue protein sequence, read N- to C-terminus: MTTATQSSAPGVNVDQAEVEKFSALAARWWDPESEFKPLHAINPLRLGWIQETAGSLSGKRVLDVGCGGGILSESMAVAGAQVTGIDLAEKSLKIARLHGLESGVKVDYRAVPVEELAAEQPGQYDVVTCMEMLEHVPDPASVVRACAALAKPGRWVFFSTLNRNPKSFLFAIVGAEYVLRLLPRGTHSYDSFIKPSELAASARQAGLEPTGMRGMEYNPITQVYSLSANTSVNYLMSTRK.

Residues R46, G66, D87, and M131 each contribute to the S-adenosyl-L-methionine site.

Belongs to the methyltransferase superfamily. UbiG/COQ3 family.

The enzyme catalyses a 3-demethylubiquinol + S-adenosyl-L-methionine = a ubiquinol + S-adenosyl-L-homocysteine + H(+). It catalyses the reaction a 3-(all-trans-polyprenyl)benzene-1,2-diol + S-adenosyl-L-methionine = a 2-methoxy-6-(all-trans-polyprenyl)phenol + S-adenosyl-L-homocysteine + H(+). Its pathway is cofactor biosynthesis; ubiquinone biosynthesis. Its function is as follows. O-methyltransferase that catalyzes the 2 O-methylation steps in the ubiquinone biosynthetic pathway. The protein is Ubiquinone biosynthesis O-methyltransferase of Bordetella parapertussis (strain 12822 / ATCC BAA-587 / NCTC 13253).